We begin with the raw amino-acid sequence, 131 residues long: L-ectoine synthase (131 aa).

The protein belongs to the ectoine synthase family.

It catalyses the reaction (2S)-4-acetamido-2-aminobutanoate = L-ectoine + H2O. The protein operates within amine and polyamine biosynthesis; ectoine biosynthesis; L-ectoine from L-aspartate 4-semialdehyde: step 3/3. Catalyzes the circularization of gamma-N-acetyl-alpha,gamma-diaminobutyric acid (ADABA) to ectoine (1,4,5,6-tetrahydro-2-methyl-4-pyrimidine carboxylic acid), which is an excellent osmoprotectant. In Bordetella bronchiseptica (strain ATCC BAA-588 / NCTC 13252 / RB50) (Alcaligenes bronchisepticus), this protein is L-ectoine synthase.